We begin with the raw amino-acid sequence, 161 residues long: Large ribosomal subunit protein bL21m (161 aa).

The transit peptide at 1–35 (MLQLKFIWPVARITPIYRPFTSHPFRNLATSSSIS) directs the protein to the mitochondrion.

Belongs to the bacterial ribosomal protein bL21 family. In terms of assembly, component of the mitochondrial large ribosomal subunit (mt-LSU). Mature yeast 74S mitochondrial ribosomes consist of a small (37S) and a large (54S) subunit. The 37S small subunit contains a 15S ribosomal RNA (15S mt-rRNA) and 34 different proteins. The 54S large subunit contains a 21S rRNA (21S mt-rRNA) and 46 different proteins.

Its subcellular location is the mitochondrion. In terms of biological role, component of the mitochondrial ribosome (mitoribosome), a dedicated translation machinery responsible for the synthesis of mitochondrial genome-encoded proteins, including at least some of the essential transmembrane subunits of the mitochondrial respiratory chain. The mitoribosomes are attached to the mitochondrial inner membrane and translation products are cotranslationally integrated into the membrane. The sequence is that of Large ribosomal subunit protein bL21m (MRPL49) from Saccharomyces cerevisiae (strain ATCC 204508 / S288c) (Baker's yeast).